A 719-amino-acid polypeptide reads, in one-letter code: MDGMKLSFPPESPPLSVIVALSLSASPVTIDSSAAATTVPSFVFSDGRKLNGATVLLRYVGRSAKKLPDFYGNNAFDSSQIDEWVDYASVFSSGSEFENACGRVDKYLESSTFLVGHSLSIADVAIWSALAGTGQRWESLRKSKKYQSLVRWFNSILDEYSEVLNKVLATYVKKGSGKPVAAPKSKDSQQAVKGDGQDKGKPEVDLPEAEIGKVKLRFAPEPSGYLHIGHAKAALLNKYFAERYQGEVIVRFDDTNPAKESNEFVDNLVKDIGTLGIKYEKVTYTSDYFPELMDMAEKLMREGKAYVDDTPREQMQKERMDGIDSKCRNHSVEENLKLWKEMIAGSERGLQCCVRGKFNMQDPNKAMRDPVYYRCNPMSHHRIGDKYKIYPTYDFACPFVDSLEGITHALRSSEYHDRNAQYFKVLEDMGLRQVQLYEFSRLNLVFTLLSKRKLLWFVQTGLVDGWDDPRFPTVQGIVRRGLKIEALIQFILEQGASKNLNLMEWDKLWSINKRIIDPVCPRHTAVVAERRVLFTLTDGPDEPFVRMIPKHKKFEGAGEKATTFTKSIWLEEADASAISVGEEVTLMDWGNAIVKEITKDEEGRVTALSGVLNLQGSVKTTKLKLTWLPDTNELVNLTLTEFDYLITKKKLEDDDEVADFVNPNTKKETLALGDSNMRNLKCGDVIQLERKGYFRCDVPFVKSSKPIVLFSIPDGRAAK.

Residue Ser93 participates in ATP binding. Residues 176-205 (SGKPVAAPKSKDSQQAVKGDGQDKGKPEVD) form a disordered region. Over residues 195–204 (DGQDKGKPEV) the composition is skewed to basic and acidic residues. L-glutamate is bound at residue 217-219 (RFA). Residues 220-230 (PEPSGYLHIGH) carry the 'HIGH' region motif. His227 is an ATP binding site. L-glutamate is bound by residues 393 to 397 (YDFAC) and Arg411. ATP-binding positions include Glu414 and 448-452 (LLSKR). Positions 448–452 (LLSKR) match the 'KMSKS' region motif.

This sequence belongs to the class-I aminoacyl-tRNA synthetase family. Glutamate--tRNA ligase type 2 subfamily. As to quaternary structure, interacts with GLN2, COL4 and RPP13L4/ZAR1.

The protein localises to the cytoplasm. It is found in the cytosol. It carries out the reaction tRNA(Glu) + L-glutamate + ATP = L-glutamyl-tRNA(Glu) + AMP + diphosphate. In terms of biological role, catalyzes the attachment of glutamate to tRNA(Glu) in a two-step reaction: glutamate is first activated by ATP to form Glu-AMP and then transferred to the acceptor end of tRNA(Glu). The sequence is that of Glutamate--tRNA ligase, cytoplasmic from Arabidopsis thaliana (Mouse-ear cress).